Consider the following 151-residue polypeptide: Major curlin subunit (151 aa).

Residues 1-20 form the signal peptide; sequence MKLLKVAAIAAIVFSGSALA. Residues 71–90 are disordered; that stretch reads TQHGGGNGADVGQGSDDSSI.

The protein belongs to the CsgA/CsgB family.

It localises to the fimbrium. Curlin is the structural subunit of the curli fimbriae. Curli are coiled surface structures that assemble preferentially at growth temperatures below 37 degrees Celsius. Curli can bind to fibronectin. In Escherichia coli (strain K12), this protein is Major curlin subunit (csgA).